Reading from the N-terminus, the 660-residue chain is UvrABC system protein C (660 aa).

The 80-residue stretch at 16-95 (ESPGVYRFRD…IKQYDPRFNV (80 aa)) folds into the GIY-YIG domain. The UVR domain occupies 208 to 243 (DAMVRRLEREMAEASAELEFERAARLRDDLAALRRA). Residues 469–501 (GEAGVESAGDPDAPAGPDAPDEPRVGTLVDPTT) are disordered. The span at 476–486 (AGDPDAPAGPD) shows a compositional bias: low complexity.

This sequence belongs to the UvrC family. In terms of assembly, interacts with UvrB in an incision complex.

The protein localises to the cytoplasm. The UvrABC repair system catalyzes the recognition and processing of DNA lesions. UvrC both incises the 5' and 3' sides of the lesion. The N-terminal half is responsible for the 3' incision and the C-terminal half is responsible for the 5' incision. The polypeptide is UvrABC system protein C (Salinispora arenicola (strain CNS-205)).